Reading from the N-terminus, the 345-residue chain is Metal-dependent phosphohydrolase cns2 (345 aa).

One can recognise an HD domain in the interval Arg70 to Ala171.

In terms of assembly, interacts with cns1.

The protein localises to the lipid droplet. It functions in the pathway secondary metabolite biosynthesis. Its function is as follows. Metal-dependent phosphohydrolase; part of the gene cluster that mediates the biosynthesis of cordycepin (COR) and pentostatin (PTN), two adenosine analogs with related bioactivity profiles as both mimic adenosine and can inhibit some of the processes that are adenosine dependent. Within the pathway, cns2 catalyzes dephosphorylation of 3'-AMP to produce 2'-carbonyl-3'-deoxyadenosine (2'-C-3'-dA). The first step of cordycepin biosynthesis involves hydroxyl phosphorylation of the 3'-OH position on adenosine to produce adenosine-3'-monophosphate (3'-AMP), catalyzed by kinase activity of cns3. Next, 3'-AMP is dephosphorylated to 2'-carbonyl-3'-deoxyadenosine by cns2, which is finally converted to cordycepin (3'-deoxyadenosine) by the oxidoreductase cns1. The protein is Metal-dependent phosphohydrolase cns2 of Cordyceps militaris (strain CM01) (Caterpillar fungus).